The following is a 380-amino-acid chain: S-phase entry cyclin-6 (380 aa).

Residues 63-91 (PRGKLQRDSTHLEKTRKRQLSNDSTDPIE) are disordered.

This sequence belongs to the cyclin family. Cyclin AB subfamily.

In terms of biological role, involved in G1/S and or S phase progression. Interacts with CDC28. This chain is S-phase entry cyclin-6 (CLB6), found in Saccharomyces cerevisiae (strain ATCC 204508 / S288c) (Baker's yeast).